Here is a 292-residue protein sequence, read N- to C-terminus: MTSTFQTIGIVGHPRHPNALATHETLYHWLNEKGYHVIMEHQIARYLALHEAITGSLADIGQQADLAIVIGGDGNMLGAARILARYDIKVIGINRGNLGFLTDLDPDSALAQLSDVLAGHFRSEKRFLLEAQVCRGDVCGRLSSSINEVVLHPGKVAHMIEFEVYIDDTFAFSQRSDGLIIATPTGSTAYSLSAGGPILTPLVDAIALVPMFPHTLSSRPLVINGGSTIRLKFSQLTPDLEISCDSQIALPIQDGEEIFIRRSDYYLDLIHPNDYNYFNTLSSKLGWSKKLF.

The active-site Proton acceptor is the Asp-73. Residues 73-74, 147-148, His-158, Arg-175, Asp-177, 188-193, and Gln-247 each bind NAD(+); these read DG, NE, and TAYSLS.

Belongs to the NAD kinase family. Requires a divalent metal cation as cofactor.

It localises to the cytoplasm. It carries out the reaction NAD(+) + ATP = ADP + NADP(+) + H(+). Functionally, involved in the regulation of the intracellular balance of NAD and NADP, and is a key enzyme in the biosynthesis of NADP. Catalyzes specifically the phosphorylation on 2'-hydroxyl of the adenosine moiety of NAD to yield NADP. This chain is NAD kinase, found in Sodalis glossinidius (strain morsitans).